A 167-amino-acid chain; its full sequence is Histidinol dehydrogenase (167 aa).

Residues Gln109 and His112 each coordinate Zn(2+).

It belongs to the histidinol dehydrogenase family. Homodimer. The cofactor is Zn(2+).

The catalysed reaction is L-histidinol + 2 NAD(+) + H2O = L-histidine + 2 NADH + 3 H(+). Its pathway is amino-acid biosynthesis; L-histidine biosynthesis; L-histidine from 5-phospho-alpha-D-ribose 1-diphosphate: step 9/9. Its function is as follows. Catalyzes the sequential NAD-dependent oxidations of L-histidinol to L-histidinaldehyde and then to L-histidine. The chain is Histidinol dehydrogenase (hisD) from Salmonella enteritidis.